A 152-amino-acid polypeptide reads, in one-letter code: SsrA-binding protein (152 aa).

Belongs to the SmpB family.

Its subcellular location is the cytoplasm. Required for rescue of stalled ribosomes mediated by trans-translation. Binds to transfer-messenger RNA (tmRNA), required for stable association of tmRNA with ribosomes. tmRNA and SmpB together mimic tRNA shape, replacing the anticodon stem-loop with SmpB. tmRNA is encoded by the ssrA gene; the 2 termini fold to resemble tRNA(Ala) and it encodes a 'tag peptide', a short internal open reading frame. During trans-translation Ala-aminoacylated tmRNA acts like a tRNA, entering the A-site of stalled ribosomes, displacing the stalled mRNA. The ribosome then switches to translate the ORF on the tmRNA; the nascent peptide is terminated with the 'tag peptide' encoded by the tmRNA and targeted for degradation. The ribosome is freed to recommence translation, which seems to be the essential function of trans-translation. This chain is SsrA-binding protein, found in Rickettsia typhi (strain ATCC VR-144 / Wilmington).